The primary structure comprises 185 residues: Protein N-terminal glutamine amidohydrolase (185 aa).

Active-site residues include cysteine 14, histidine 62, and aspartate 78.

Belongs to the NTAQ1 family. As to quaternary structure, monomer.

The enzyme catalyses N-terminal L-glutaminyl-[protein] + H2O = N-terminal L-glutamyl-[protein] + NH4(+). In terms of biological role, mediates the side-chain deamidation of N-terminal glutamine residues to glutamate, an important step in N-end rule pathway of protein degradation. Conversion of the resulting N-terminal glutamine to glutamate renders the protein susceptible to arginylation, polyubiquitination and degradation as specified by the N-end rule. Does not act on substrates with internal or C-terminal glutamine and does not act on non-glutamine residues in any position. The polypeptide is Protein N-terminal glutamine amidohydrolase (Caenorhabditis briggsae).